A 136-amino-acid polypeptide reads, in one-letter code: Fluoride-specific ion channel FluC (136 aa).

4 helical membrane passes run 3-23 (TLPP…GAVL), 46-66 (ATLA…GVLF), 78-98 (LLIG…SLEV), and 109-129 (FAAL…VFGL). Na(+) is bound by residues glycine 86 and threonine 89.

The protein belongs to the fluoride channel Fluc/FEX (TC 1.A.43) family.

Its subcellular location is the cell inner membrane. The catalysed reaction is fluoride(in) = fluoride(out). Na(+) is not transported, but it plays an essential structural role and its presence is essential for fluoride channel function. Fluoride-specific ion channel. Important for reducing fluoride concentration in the cell, thus reducing its toxicity. The polypeptide is Fluoride-specific ion channel FluC (Erythrobacter litoralis (strain HTCC2594)).